The primary structure comprises 592 residues: MRKPADEHHFTMETSGMHLVGFWLHVLLLFQLSGLGDSASKDIVCEPITVPMCKGIGYNHTYMPNQFNHDNQDEVGLEVHQFWPLVRIHCSPDLLFFLCSMYTPICLQDYKKPLPPCRSVCERAKRGCSPLMIQYGFEWPERMSCEQLPMLGDTDRLCMDRNSSETTTLSPPFPKPTPKGTPRHRATAKSAPPQKCDRECHCRGPLVPIKKEAHPLHNRVNTGSLPNCALPCHQPYFSQDERTFTTFWIGLWSVLCFVSTFTTVATFLIDMERFKYPERPIIFLAACYLFVSLGYIVRLLAGHERVACEGTGDQQHILYDTTGPALCTLVFLLIYFFGMASSIWWVVLSFTWFLAAGMKWGNEAIAGYSQYFHLAAWLVPSVKSIAVLALSSVDGDPVAGICYVGNQSLEGLRGFVLAPLVVYLFTGSLFLLAGFVSLFRIRSVIKQGGTKTDKLEKLMIRIGLFTVLYTVPATIVVACLVYEQHYRPSWERALACSCPSERQRLGMGPDYAVFMLKYFMCLVVGITSGVWIWSGKTLESWRRFIARYVPCRTRKPPVSASSMYSEASTALTARAGTAPTGTYHKSAPSSHV.

The signal sequence occupies residues 1–38; that stretch reads MRKPADEHHFTMETSGMHLVGFWLHVLLLFQLSGLGDS. Over 39-248 the chain is Extracellular; the sequence is ASKDIVCEPI…QDERTFTTFW (210 aa). The FZ domain occupies 40–161; the sequence is SKDIVCEPIT…GDTDRLCMDR (122 aa). 5 cysteine pairs are disulfide-bonded: cysteine 45/cysteine 106, cysteine 53/cysteine 99, cysteine 90/cysteine 128, cysteine 117/cysteine 158, and cysteine 121/cysteine 145. The disordered stretch occupies residues 162–192; that stretch reads NSSETTTLSPPFPKPTPKGTPRHRATAKSAP. The helical transmembrane segment at 249–269 threads the bilayer; it reads IGLWSVLCFVSTFTTVATFLI. Residues 270-280 are Cytoplasmic-facing; that stretch reads DMERFKYPERP. The helical transmembrane segment at 281-301 threads the bilayer; the sequence is IIFLAACYLFVSLGYIVRLLA. At 302–327 the chain is on the extracellular side; it reads GHERVACEGTGDQQHILYDTTGPALC. Residues 328–348 form a helical membrane-spanning segment; sequence TLVFLLIYFFGMASSIWWVVL. The Cytoplasmic portion of the chain corresponds to 349–370; it reads SFTWFLAAGMKWGNEAIAGYSQ. The chain crosses the membrane as a helical span at residues 371–391; sequence YFHLAAWLVPSVKSIAVLALS. Residues 392–414 lie on the Extracellular side of the membrane; that stretch reads SVDGDPVAGICYVGNQSLEGLRG. A helical transmembrane segment spans residues 415-435; the sequence is FVLAPLVVYLFTGSLFLLAGF. Topologically, residues 436–461 are cytoplasmic; that stretch reads VSLFRIRSVIKQGGTKTDKLEKLMIR. A helical transmembrane segment spans residues 462–482; that stretch reads IGLFTVLYTVPATIVVACLVY. The Extracellular portion of the chain corresponds to 483-512; the sequence is EQHYRPSWERALACSCPSERQRLGMGPDYA. A helical transmembrane segment spans residues 513 to 533; it reads VFMLKYFMCLVVGITSGVWIW. Over 534–592 the chain is Cytoplasmic; it reads SGKTLESWRRFIARYVPCRTRKPPVSASSMYSEASTALTARAGTAPTGTYHKSAPSSHV.

The protein belongs to the G-protein coupled receptor Fz/Smo family.

It is found in the cell membrane. The protein localises to the golgi apparatus membrane. The protein resides in the synapse. Its subcellular location is the perikaryon. It localises to the cell projection. It is found in the dendrite. The protein localises to the axon. Functionally, receptor for Wnt proteins. Following binding, activates the canonical Wnt/beta-catenin signaling pathway. Also activates wnt non-canonical signaling. In neurons, activation of the Wnt pathway promotes formation of synapses. May be involved in transduction and intercellular transmission of polarity information during tissue morphogenesis and/or in differentiated tissues. Plays a role in early eye development, possibly through wnt non-canonical signaling. As a receptor for wnt11, promotes eye formation, at least partially, by antagonizing the Wnt/beta-catenin pathway. In addition, promotes coherence of eye field cells, potentially contributing to the coordinated morphogenetic behaviors of cells in the nascent eye field. This chain is Frizzled-5 (fzd5), found in Danio rerio (Zebrafish).